Here is a 178-residue protein sequence, read N- to C-terminus: Heavy metal-associated isoprenylated plant protein 30 (178 aa).

The HMA domain maps to 45 to 108 (LQTIDLKVRM…AVRRAGKRAE (64 aa)). The a metal cation site is built by Cys56 and Cys59. The residue at position 175 (Cys175) is a Cysteine methyl ester. The S-farnesyl cysteine moiety is linked to residue Cys175. Positions 176–178 (SLM) are cleaved as a propeptide — removed in mature form.

The protein belongs to the HIPP family. In terms of assembly, interacts with ZHD3/HB21, ZHD11/HB29 and ZHD8/HB30.

In terms of biological role, heavy-metal-binding protein. The protein is Heavy metal-associated isoprenylated plant protein 30 of Arabidopsis thaliana (Mouse-ear cress).